The chain runs to 412 residues: MSYITKQDKVIAEAIEREFQRQNSNIELIASENFVSEAVMEAQGSVLTNKYAEGYPGRRYYGGCEFVDVTESIAIDRAKALFGAEHVNVQPHSGSQANMAVYLVALEMGDTVLGMNLSHGGHLTHGAPVNFSGKFYNFVEYGVDKDTERINYDEVRKLALEHKPKLIVAGASAYSRTIDFKKFKEIADEVNAKLMVDMAHIAGLVAAGLHPNPVEYADFVTTTTHKTLRGPRGGMILCKEEYKKDIDKTIFPGIQGGPLEHVIAAKAVAFGEALENNFKTYQQQVVKNAKVLAEALINEGFRIVSGGTDNHLVAVDVKGSIGLTGKEAEETLDSVGITCNKNTIPFDQEKPFVTSGIRLGTPAATTRGFDEKAFEEVAKIISLALKNSKDEEKLQQAKERVAKLTAEYPLYQ.

(6S)-5,6,7,8-tetrahydrofolate-binding positions include Leu-117 and 121 to 123 (GHL). At Lys-226 the chain carries N6-(pyridoxal phosphate)lysine.

The protein belongs to the SHMT family. In terms of assembly, homodimer. Pyridoxal 5'-phosphate serves as cofactor.

It is found in the cytoplasm. The enzyme catalyses (6R)-5,10-methylene-5,6,7,8-tetrahydrofolate + glycine + H2O = (6S)-5,6,7,8-tetrahydrofolate + L-serine. It participates in one-carbon metabolism; tetrahydrofolate interconversion. The protein operates within amino-acid biosynthesis; glycine biosynthesis; glycine from L-serine: step 1/1. Catalyzes the reversible interconversion of serine and glycine with tetrahydrofolate (THF) serving as the one-carbon carrier. This reaction serves as the major source of one-carbon groups required for the biosynthesis of purines, thymidylate, methionine, and other important biomolecules. Also exhibits THF-independent aldolase activity toward beta-hydroxyamino acids, producing glycine and aldehydes, via a retro-aldol mechanism. This is Serine hydroxymethyltransferase from Staphylococcus aureus (strain MW2).